Here is a 295-residue protein sequence, read N- to C-terminus: Acetylglutamate kinase (295 aa).

Residues 66–67, R88, and N193 each bind substrate; that span reads GG.

It belongs to the acetylglutamate kinase family. ArgB subfamily.

It localises to the cytoplasm. The catalysed reaction is N-acetyl-L-glutamate + ATP = N-acetyl-L-glutamyl 5-phosphate + ADP. It participates in amino-acid biosynthesis; L-arginine biosynthesis; N(2)-acetyl-L-ornithine from L-glutamate: step 2/4. Catalyzes the ATP-dependent phosphorylation of N-acetyl-L-glutamate. This Bradyrhizobium diazoefficiens (strain JCM 10833 / BCRC 13528 / IAM 13628 / NBRC 14792 / USDA 110) protein is Acetylglutamate kinase.